Consider the following 431-residue polypeptide: Acrosin (431 aa).

Positions 1–16 (MLPTAVLLVLVVSVVA) are cleaved as a signal peptide. The N-linked (GlcNAc...) asparagine glycan is linked to N19. Disulfide bonds link C22-C152, C26-C160, C71-C87, C175-C244, C207-C223, and C234-C264. The Peptidase S1 domain occupies 40 to 288 (VVGGQAAQQG…FLDWIASRIG (249 aa)). Catalysis depends on charge relay system residues H86 and D140. N208 carries an N-linked (GlcNAc...) asparagine glycan. Catalysis depends on S238, which acts as the Charge relay system. Positions 295 to 385 (IQPATPTPPT…PPPASTKPPQ (91 aa)) are disordered. Residues 331 to 341 (PHPHPHPHPHP) are compositionally biased toward basic residues. The segment covering 342-381 (RPPQPPAAQAPPPPPPPPPPPPPPPPPPPPPPPPPPPAST) has biased composition (pro residues). The propeptide at 351 to 431 (APPPPPPPPP…TEIPEVTLAS (81 aa)) is pro-rich.

This sequence belongs to the peptidase S1 family. In terms of assembly, heavy chain (catalytic) and a light chain linked by two disulfide bonds. Forms a heterodimer with SERPINA5.

It catalyses the reaction Preferential cleavage: Arg-|-Xaa, Lys-|-Xaa.. Its activity is regulated as follows. Inhibited by SERPINA5. In terms of biological role, acrosin is the major protease of mammalian spermatozoa. It is a serine protease of trypsin-like cleavage specificity, it is synthesized in a zymogen form, proacrosin and stored in the acrosome. The chain is Acrosin (ACR) from Oryctolagus cuniculus (Rabbit).